Here is a 154-residue protein sequence, read N- to C-terminus: UPF0756 membrane protein EAT1b_0668 (154 aa).

A run of 5 helical transmembrane segments spans residues 5–25 (LFLL…VIIA), 52–72 (WGVT…DIGF), 82–102 (PVGI…GQGV), 107–127 (VDPV…GFMK), and 129–149 (IPVG…GYQV).

It belongs to the UPF0756 family.

It localises to the cell membrane. The polypeptide is UPF0756 membrane protein EAT1b_0668 (Exiguobacterium sp. (strain ATCC BAA-1283 / AT1b)).